A 295-amino-acid chain; its full sequence is Myosin light chain kinase A (295 aa).

Residues 8–265 enclose the Protein kinase domain; sequence YEFKEELGRG…ATNALNHPWL (258 aa). ATP contacts are provided by residues 14 to 22 and K37; that span reads LGRGAFSIV. D130 serves as the catalytic Proton acceptor. T166 and T289 each carry phosphothreonine. Residues 264 to 295 form an autoinhibitory domain region; that stretch reads WLKSNNSNNTIDTVKMKEYIVERQKTQTKLVN.

It belongs to the protein kinase superfamily. CAMK Ser/Thr protein kinase family. CaMK subfamily. Post-translationally, autophosphorylated. Transiently phosphorylated on Thr-166 and Thr-289. This phosphorylation is gbpC-dependent.

It carries out the reaction L-seryl-[myosin light chain] + ATP = O-phospho-L-seryl-[myosin light chain] + ADP + H(+). The enzyme catalyses L-threonyl-[myosin light chain] + ATP = O-phospho-L-threonyl-[myosin light chain] + ADP + H(+). With respect to regulation, possesses an autoinhibitory domain. Autophosphorylation appears to increase the enzymatic activity. Activation is gbdC-dependent. Does not have a calmodulin-binding domain. Its function is as follows. Phosphorylates a specific serine in the N-terminus of a myosin light chain. Phosphorylates regulatory myosin light chain (mlcR) during chemotaxis. mlcR phosphorylation increases the motility and actin-activated ATPase activity of myosin, contributing to chemotaxis. In Dictyostelium discoideum (Social amoeba), this protein is Myosin light chain kinase A (mlkA).